Reading from the N-terminus, the 481-residue chain is Guanine nucleotide exchange factor C9orf72 (481 aa).

Residues 23 to 194 enclose the uDENN C9ORF72-type domain; the sequence is SPLLAATFAY…ELLSSMKSHS (172 aa). The cDENN C9ORF72-type domain occupies 200–343; the sequence is DIADTVLNDD…SELTAFWRAT (144 aa). The dDENN C9ORF72-type domain occupies 370–464; it reads VLHRDTLVKA…IKPGLHSFIF (95 aa). The tract at residues 461-481 is required for the homodimerization of the C9orf72-SMCR8 complex; that stretch reads SFIFGRPFYTSVQERDVLMTF.

In terms of assembly, component of the C9orf72-SMCR8 complex, at least composed of C9orf72, SMCR8 and WDR41. The complex is formed of two protomers, each individually consisting of one molecule each of C9orf72, SMCR8 and WDR41. The protomers homodimerize via an interaction between C9orf72 (via C-terminus) and SMCR8 (via N-terminus). Within each protomer SMCR8 (via DENN domain) acts as a bridging protein between WDR41 (via C-terminus and N-terminus) and C9orf72 (via C-terminus). The C9orf72-SMCR8 complex associates with the ULK1/ATG1 kinase complex. Interacts with ULK1/ATG1 kinase complex members ULK1, ATG13 and RB1CC1. Interacts with SMCR8; the interaction is direct. Interacts with HNRNPA1, HNRNPA2B1 and UBQLN2. Interacts with small Rab GTPase RAB1A; the interaction mediates recruitment of RAB1A to the ULK1/ATG1 kinase complex. Also interacts with small Rab GTPase RAB7A. Interacts with cofilin. Interacts with GTP-binding proteins ARF1 and ARF6. Interacts with the DLG4/PSD-95. Interacts with CARM1 (via PH domain-like fold). Interacts with RAB39A and RAB39B (in GDP-bound forms); functions as GEF for RAB39A and RAB39B. As to expression, both isoforms are widely expressed, including kidney, lung, liver, heart, testis and several brain regions, such as cerebellum. Also expressed in the frontal cortex and in lymphoblasts (at protein level).

The protein resides in the cytoplasm. The protein localises to the nucleus. It localises to the P-body. Its subcellular location is the stress granule. It is found in the endosome. The protein resides in the lysosome. The protein localises to the cytoplasmic vesicle. It localises to the autophagosome. Its subcellular location is the autolysosome. It is found in the secreted. The protein resides in the cell projection. The protein localises to the axon. It localises to the growth cone. Its subcellular location is the perikaryon. It is found in the dendrite. The protein resides in the presynapse. The protein localises to the postsynapse. It localises to the nucleus membrane. Its function is as follows. Acts as a guanine-nucleotide releasing factor (GEF) for Rab GTPases by promoting the conversion of inactive RAB-GDP to the active form RAB-GTP. Acts as a GEF for RAB39A which enables HOPS-mediated autophagosome-lysosome membrane tethering and fusion in mammalian autophagy. Component of the C9orf72-SMCR8 complex where both subunits display GEF activity and that regulates autophagy. As part of the C9orf72-SMCR8-WDR41 (CSW) complex, functions as GEF for RAB8A and RAB39B, thereby promoting autophagosome maturation. As part of the C9orf72-SMCR8 complex, also functions as GTPase activating protein (GAP) for RAB8A and RAB11A in vitro. The C9orf72-SMCR8 complex also acts as a regulator of autophagy initiation by interacting with the ULK1/ATG1 kinase complex and modulating its protein kinase activity. Promotes initiation of autophagy by regulating the RAB1A-dependent trafficking of the ULK1/ATG1 kinase complex to the phagophore which leads to autophagosome formation. Acts as a regulator of mTORC1 signaling by promoting phosphorylation of mTORC1 substrates. Plays a role in endosomal trafficking. May be involved in regulating the maturation of phagosomes to lysosomes. Promotes the lysosomal localization and lysosome-mediated degradation of CARM1 which leads to inhibition of starvation-induced lipid metabolism. Regulates actin dynamics in motor neurons by inhibiting the GTP-binding activity of ARF6, leading to ARF6 inactivation. This reduces the activity of the LIMK1 and LIMK2 kinases which are responsible for phosphorylation and inactivation of cofilin, leading to CFL1/cofilin activation. Positively regulates axon extension and axon growth cone size in spinal motor neurons. Required for SMCR8 protein expression and localization at pre- and post-synaptic compartments in the forebrain, also regulates protein abundance of RAB3A and GRIA1/GLUR1 in post-synaptic compartments in the forebrain and hippocampus. Plays a role within the hematopoietic system in restricting inflammation and the development of autoimmunity. Regulates stress granule assembly in response to cellular stress. In terms of biological role, does not play a role in regulation of stress granule assembly in response to cellular stress. The polypeptide is Guanine nucleotide exchange factor C9orf72 (Homo sapiens (Human)).